The primary structure comprises 787 residues: (-)-kolavenyl diphosphate synthase, chloroplastic (787 aa).

The transit peptide at 1 to 47 (MSFATSLPRPTTTGAAGFGLPLATCISLSVSHSFSPKFGICNNTSLR) directs the protein to the chloroplast. Position 237 (Lys-237) interacts with substrate. Mg(2+) is bound by residues Asp-368 and Asp-370. A DXDD motif motif is present at residues 368–371 (DSDD). Lys-454 provides a ligand contact to substrate.

This sequence belongs to the terpene synthase family. Tpsc subfamily. It depends on Mg(2+) as a cofactor. Expressed in peltate glandular trichomes of leaves. Highly expressed in the first leaf pair.

It localises to the plastid. Its subcellular location is the chloroplast. It carries out the reaction (2E,6E,10E)-geranylgeranyl diphosphate = (-)-kolavenyl diphosphate. Its activity is regulated as follows. Inhibited by high concentrations of magnesium. In terms of biological role, involved in the biosynthesis of clerodane diterpenoids natural products, including salvinorin A with potent agonistic activity on brain kappa-opioid receptors, thus conferring hallucinogenic properties. Diterpene synthase that catalyzes the formation of (-)-kolavenyl diphosphate from geranylgeranyl diphosphate (GGPP) as the first reaction in salvinorin A biosynthesis. In Salvia divinorum (Maria pastora), this protein is (-)-kolavenyl diphosphate synthase, chloroplastic.